Reading from the N-terminus, the 231-residue chain is Large ribosomal subunit protein uL1 (231 aa).

This sequence belongs to the universal ribosomal protein uL1 family. As to quaternary structure, part of the 50S ribosomal subunit.

Binds directly to 23S rRNA. The L1 stalk is quite mobile in the ribosome, and is involved in E site tRNA release. Functionally, protein L1 is also a translational repressor protein, it controls the translation of the L11 operon by binding to its mRNA. This Ectopseudomonas mendocina (strain ymp) (Pseudomonas mendocina) protein is Large ribosomal subunit protein uL1.